A 272-amino-acid polypeptide reads, in one-letter code: Alcohol dehydrogenase-related 31 kDa protein (272 aa).

11–34 (YVADCGGIALETSKVLMTKNIAKL) contacts NAD(+). A substrate-binding site is contributed by Ser139. The active-site Proton acceptor is the Tyr152.

It belongs to the short-chain dehydrogenases/reductases (SDR) family.

The polypeptide is Alcohol dehydrogenase-related 31 kDa protein (Adhr) (Drosophila mauritiana (Fruit fly)).